Reading from the N-terminus, the 88-residue chain is Large ribosomal subunit protein eL37 (88 aa).

4 residues coordinate Zn(2+): cysteine 17, cysteine 20, cysteine 32, and cysteine 35. The C4-type zinc-finger motif lies at 17–35 (CNRCGRRSFHVQKKTCSSC).

Belongs to the eukaryotic ribosomal protein eL37 family. Zn(2+) is required as a cofactor.

In terms of biological role, binds to the 23S rRNA. This chain is Large ribosomal subunit protein eL37 (RPL37), found in Candida albicans (Yeast).